Here is a 694-residue protein sequence, read N- to C-terminus: uncharacterized protein (694 aa).

Residues 15-51 are a coiled coil; the sequence is HKEKMELLDQFDNERKEWESQWKIMQKKIEELCREVK. 3 disordered regions span residues 259-286, 461-490, and 643-680; these read LKRN…EQAY, QNHS…QSND, and NASH…RRTT. Polar residues-rich tracts occupy residues 272 to 283 and 476 to 490; these read STSRNFPSSDSE and DTSS…QSND. Over residues 663–677 the composition is skewed to low complexity; it reads SRWASRSPSAPPALR.

This is an uncharacterized protein from Homo sapiens (Human).